We begin with the raw amino-acid sequence, 215 residues long: Urease accessory protein UreG 2 (215 aa).

11-18 (GPVGSGKT) contributes to the GTP binding site.

It belongs to the SIMIBI class G3E GTPase family. UreG subfamily. In terms of assembly, homodimer. UreD, UreF and UreG form a complex that acts as a GTP-hydrolysis-dependent molecular chaperone, activating the urease apoprotein by helping to assemble the nickel containing metallocenter of UreC. The UreE protein probably delivers the nickel.

Its subcellular location is the cytoplasm. In terms of biological role, facilitates the functional incorporation of the urease nickel metallocenter. This process requires GTP hydrolysis, probably effectuated by UreG. This is Urease accessory protein UreG 2 from Methylorubrum extorquens (strain PA1) (Methylobacterium extorquens).